Consider the following 308-residue polypeptide: Lysophosphatidic acid receptor 6 (308 aa).

At 1–16 (MVSSNCSTEDSFKYTL) the chain is on the extracellular side. Asparagine 5 carries an N-linked (GlcNAc...) asparagine glycan. The chain crosses the membrane as a helical span at residues 17–43 (YGCVFSMVFVLGLIANCVAIYIFTFTL). Residues 44–52 (KVRNETTTY) are Cytoplasmic-facing. The helical transmembrane segment at 53 to 76 (MLNLAISDLLFVFTLPFRIYYFVV) threads the bilayer. Over 77–89 (RNWPFGDVLCKIS) the chain is Extracellular. A disulfide bond links cysteine 86 and cysteine 165. The chain crosses the membrane as a helical span at residues 90–109 (VTLFYTNMYGSILFLTCISV). Over 110–130 (DRFLAIVHPFRSKTLRTKRNA) the chain is Cytoplasmic. Residues 131 to 151 (RIVCVAVWITVLAGSTPASFF) traverse the membrane as a helical segment. Over 152 to 178 (QSTNRQNNTEQRTCFENFPESTWKTYL) the chain is Extracellular. A helical transmembrane segment spans residues 179-206 (SRIVIFIEIVGFFIPLILNVTCSTMVLR). Residues 207–224 (TLNKPLTLSRNKLSKKKV) are Cytoplasmic-facing. The chain crosses the membrane as a helical span at residues 225–250 (LKMIFVHLVIFCFCFVPYNITLILYS). Residues 251-269 (LMRTQTWINCSVVTAVRTM) are Extracellular-facing. Residues 270-289 (YPVTLCIAVSNCCFDPIVYY) form a helical membrane-spanning segment. Cysteine 281 carries the S-palmitoyl cysteine lipid modification. Residues 290-308 (FTSDTNSELDKKQQVHQNT) are Cytoplasmic-facing.

It belongs to the G-protein coupled receptor 1 family. As to expression, induced in activated T-cells.

It is found in the cell membrane. Binds to oleoyl-L-alpha-lysophosphatidic acid (LPA). Intracellular cAMP is involved in the receptor activation. This is Lysophosphatidic acid receptor 6 (LPAR6) from Gallus gallus (Chicken).